The sequence spans 315 residues: Acetaldehyde dehydrogenase 2 (315 aa).

Residue 13–16 (SGNI) participates in NAD(+) binding. Cysteine 131 functions as the Acyl-thioester intermediate in the catalytic mechanism. NAD(+) contacts are provided by residues 162–170 (SAGPGTRAN) and asparagine 290.

Belongs to the acetaldehyde dehydrogenase family.

The enzyme catalyses acetaldehyde + NAD(+) + CoA = acetyl-CoA + NADH + H(+). This is Acetaldehyde dehydrogenase 2 from Pseudomonas putida (strain W619).